The following is a 412-amino-acid chain: Subtilisin-like protease 6 (412 aa).

Residues 1–20 form the signal peptide; the sequence is MGFITKAIPIVLAALSTVNG. Positions 21 to 127 are excised as a propeptide; it reads ARILEAGPHA…VRTTTNGTNL (107 aa). One can recognise an Inhibitor I9 domain in the interval 36-120; it reads KYIVVMKKDV…FIEPDFVVRT (85 aa). In terms of domain architecture, Peptidase S8 spans 135-412; sequence SWGLARVGSK…SKLIYNGSGK (278 aa). Residues Asp167 and His198 each act as charge relay system in the active site. Residues Asn252 and Asn264 are each glycosylated (N-linked (GlcNAc...) asparagine). The active-site Charge relay system is the Ser358. Asn408 carries N-linked (GlcNAc...) asparagine glycosylation.

The protein belongs to the peptidase S8 family.

It localises to the secreted. In terms of biological role, secreted subtilisin-like serine protease with keratinolytic activity that contributes to pathogenicity. The chain is Subtilisin-like protease 6 (SUB6) from Arthroderma benhamiae (strain ATCC MYA-4681 / CBS 112371) (Trichophyton mentagrophytes).